The chain runs to 511 residues: Bifunctional purine biosynthesis protein PurH (511 aa).

In terms of domain architecture, MGS-like spans 1 to 147; the sequence is MIQIKRALIS…KNYKHTLVLT (147 aa).

The protein belongs to the PurH family.

The enzyme catalyses (6R)-10-formyltetrahydrofolate + 5-amino-1-(5-phospho-beta-D-ribosyl)imidazole-4-carboxamide = 5-formamido-1-(5-phospho-D-ribosyl)imidazole-4-carboxamide + (6S)-5,6,7,8-tetrahydrofolate. It catalyses the reaction IMP + H2O = 5-formamido-1-(5-phospho-D-ribosyl)imidazole-4-carboxamide. The protein operates within purine metabolism; IMP biosynthesis via de novo pathway; 5-formamido-1-(5-phospho-D-ribosyl)imidazole-4-carboxamide from 5-amino-1-(5-phospho-D-ribosyl)imidazole-4-carboxamide (10-formyl THF route): step 1/1. Its pathway is purine metabolism; IMP biosynthesis via de novo pathway; IMP from 5-formamido-1-(5-phospho-D-ribosyl)imidazole-4-carboxamide: step 1/1. This Leptospira borgpetersenii serovar Hardjo-bovis (strain JB197) protein is Bifunctional purine biosynthesis protein PurH.